Consider the following 103-residue polypeptide: Matrix Gla protein (103 aa).

The first 19 residues, M1–C19, serve as a signal peptide directing secretion. E21 is subject to 4-carboxyglutamate. A phosphoserine mark is found at S22, S25, and S28. The 47-residue stretch at H51–R97 folds into the Gla domain. 4-carboxyglutamate is present on residues E56, E60, E67, and E71. An intrachain disulfide couples C73 to C79.

It belongs to the osteocalcin/matrix Gla protein family. In terms of processing, requires vitamin K-dependent gamma-carboxylation for its function.

The protein localises to the secreted. Associates with the organic matrix of bone and cartilage. Thought to act as an inhibitor of bone formation. The protein is Matrix Gla protein (Mgp) of Rattus norvegicus (Rat).